Here is a 116-residue protein sequence, read N- to C-terminus: MESHSLTLDEACAFLKISRPTATNWIRTGRLQATRKDPTKPKSPYLTTRQACIAALQSPLHTVQVSAGDDITEELKCHYSAEVKPGTPVSHCRTAKDLSSLLGQRTKGRPQSFMTS.

Functionally, part of the excision complex necessary for the excision of prophage from the host genome by site-specific recombination at the att site. This is Excisionase (xis) from Salmonella phage P22 (Bacteriophage P22).